The primary structure comprises 146 residues: Globin (146 aa).

Residue Ala1 is modified to N-acetylalanine. Residues 1-146 (ALTEPQKTAL…LLTMLIKAHS (146 aa)) form the Globin domain. Residues His65 and His97 each contribute to the heme b site.

Belongs to the globin family. Homodimer.

This is Globin from Buccinum undatum (Common whelk).